Reading from the N-terminus, the 330-residue chain is 7,8-didemethyl-8-hydroxy-5-deazariboflavin synthase (330 aa).

The 241-residue stretch at 13–253 (VTFSKNAFIP…EDISIQVPPN (241 aa)) folds into the Radical SAM core domain. [4Fe-4S] cluster-binding residues include Cys-27, Cys-31, and Cys-34.

The protein belongs to the radical SAM superfamily. CofG family. In terms of assembly, consists of two subunits, CofG and CofH. It depends on [4Fe-4S] cluster as a cofactor.

It carries out the reaction 5-amino-5-(4-hydroxybenzyl)-6-(D-ribitylimino)-5,6-dihydrouracil + S-adenosyl-L-methionine = 7,8-didemethyl-8-hydroxy-5-deazariboflavin + 5'-deoxyadenosine + L-methionine + NH4(+) + H(+). It functions in the pathway cofactor biosynthesis; coenzyme F0 biosynthesis. Functionally, catalyzes the radical-mediated synthesis of 7,8-didemethyl-8-hydroxy-5-deazariboflavin from 5-amino-5-(4-hydroxybenzyl)-6-(D-ribitylimino)-5,6-dihydrouracil. The chain is 7,8-didemethyl-8-hydroxy-5-deazariboflavin synthase from Methanococcus maripaludis (strain DSM 14266 / JCM 13030 / NBRC 101832 / S2 / LL).